The following is a 284-amino-acid chain: Pseudouridine-5'-phosphate glycosidase (284 aa).

Glutamate 17 functions as the Proton donor in the catalytic mechanism. Substrate contacts are provided by lysine 77 and valine 97. Aspartate 126 contributes to the Mn(2+) binding site. Residue 128 to 130 (SQD) coordinates substrate. The active-site Nucleophile is lysine 147.

The protein belongs to the pseudouridine-5'-phosphate glycosidase family. As to quaternary structure, homotrimer. Requires Mn(2+) as cofactor.

It carries out the reaction D-ribose 5-phosphate + uracil = psi-UMP + H2O. In terms of biological role, catalyzes the reversible cleavage of pseudouridine 5'-phosphate (PsiMP) to ribose 5-phosphate and uracil. Functions biologically in the cleavage direction, as part of a pseudouridine degradation pathway. In Thermotoga petrophila (strain ATCC BAA-488 / DSM 13995 / JCM 10881 / RKU-1), this protein is Pseudouridine-5'-phosphate glycosidase.